Here is a 463-residue protein sequence, read N- to C-terminus: Casein kinase 1 (463 aa).

A Protein kinase domain is found at 9–278 (FKLGRKIGSG…LKRLFRDLFI (270 aa)). Residues 15–23 (IGSGSFGEL) and lysine 38 contribute to the ATP site. The active-site Proton acceptor is the aspartate 128. Over residues 296-306 (ESNRLRSSGRT) the composition is skewed to polar residues. The segment at 296–448 (ESNRLRSSGR…TARNVHDDPT (153 aa)) is disordered. Positions 315–328 (ERTERAAARQDVPD) are enriched in basic and acidic residues. Polar residues-rich tracts occupy residues 376 to 396 (TSSS…SRPS) and 404 to 440 (NRSN…TKTA).

The protein belongs to the protein kinase superfamily. CK1 Ser/Thr protein kinase family. Casein kinase I subfamily. Monomer. In terms of processing, autophosphorylated. As to expression, expressed in leaves, stems, panicles and seeds. Expressed in root tissues and lamina joints.

It is found in the cytoplasm. Its subcellular location is the nucleus. The enzyme catalyses L-seryl-[protein] + ATP = O-phospho-L-seryl-[protein] + ADP + H(+). The catalysed reaction is L-threonyl-[protein] + ATP = O-phospho-L-threonyl-[protein] + ADP + H(+). Its activity is regulated as follows. Inhibited by N-(2-aminoethyl)-5-chloroisoquinoline-8-sulfonamide (CKI-7). Functionally, casein kinases are operationally defined by their preferential utilization of acidic proteins such as caseins as substrates. Can phosphorylate casein in vitro. Required for normal root development through modulation of cell elongation. Plants silencing CKI1 show abnormal root development, with reduced number of lateral and adventitious roots, and shortened primary roots as a result of reduced cell elongation. May be involved in abscisic acid (ABA) and brassinosteroid (BR) signaling pathways. Plays an important role in the adaptive growth and fitness under low temperature (LT) conditions. May confer tolerance to LT through an auxin-dependent process. This Oryza sativa subsp. japonica (Rice) protein is Casein kinase 1 (CKI1).